Here is a 360-residue protein sequence, read N- to C-terminus: Chorismate synthase (360 aa).

Residue R47 coordinates NADP(+). Residues 124–126 (RSS), 240–241 (NA), G285, 300–304 (KPVAT), and R326 each bind FMN.

The protein belongs to the chorismate synthase family. In terms of assembly, homotetramer. Requires FMNH2 as cofactor.

It catalyses the reaction 5-O-(1-carboxyvinyl)-3-phosphoshikimate = chorismate + phosphate. It participates in metabolic intermediate biosynthesis; chorismate biosynthesis; chorismate from D-erythrose 4-phosphate and phosphoenolpyruvate: step 7/7. In terms of biological role, catalyzes the anti-1,4-elimination of the C-3 phosphate and the C-6 proR hydrogen from 5-enolpyruvylshikimate-3-phosphate (EPSP) to yield chorismate, which is the branch point compound that serves as the starting substrate for the three terminal pathways of aromatic amino acid biosynthesis. This reaction introduces a second double bond into the aromatic ring system. This chain is Chorismate synthase, found in Cytophaga hutchinsonii (strain ATCC 33406 / DSM 1761 / CIP 103989 / NBRC 15051 / NCIMB 9469 / D465).